The chain runs to 109 residues: Spermidine export protein MdtI (109 aa).

4 consecutive transmembrane segments (helical) span residues 6-26, 36-56, 64-84, and 88-108; these read WVHAAWLALAIVLEIVANVFL, IFGLLSQAAVLAAFSALSQAV, AYALWGGFGIAATLAAGWILF, and LNRKGWIGLVLLLAGMIMVKL.

Belongs to the drug/metabolite transporter (DMT) superfamily. Small multidrug resistance (SMR) (TC 2.A.7.1) family. MdtI subfamily. In terms of assembly, forms a complex with MdtJ.

It localises to the cell inner membrane. Functionally, catalyzes the excretion of spermidine. This Shigella dysenteriae serotype 1 (strain Sd197) protein is Spermidine export protein MdtI.